Consider the following 454-residue polypeptide: uncharacterized protein (454 aa).

The interval 422–454 is disordered; the sequence is EWLPPAHLDHGQPRTNSYFHPEKLLHDSDEDDP.

The protein belongs to the Rv1128c/1148c/1588c/1702c/1945/3466 family.

This is an uncharacterized protein from Mycobacterium tuberculosis (strain CDC 1551 / Oshkosh).